The following is a 460-amino-acid chain: Malonyl-coenzyme A:anthocyanin 3-O-glucoside-6''-O-malonyltransferase (460 aa).

Active-site proton acceptor residues include H173 and D400.

The protein belongs to the plant acyltransferase family.

It carries out the reaction an anthocyanidin 3-O-beta-D-glucoside + malonyl-CoA = an anthocyanidin 3-O-(6-O-malonyl-beta-D-glucoside) + CoA. With respect to regulation, completely inhibited by 5 mM N-ethylmaleimide or 0.1 mM Cu(2+). Partially inhibited by 0.1 mM Fe(2+) or 0.1 mM Hg(2+). Functionally, catalyzes the transfer of the malonyl group from malonyl-CoA to pelargonidin 3-O-glucoside to produce pelargonidin 3-O-6''-O-malonylglucoside. Can also transfer the malonyl group from malonyl-CoA to cyanidin 3-O-glucoside, delphinidin 3-O-glucoside and quercetin 3-O-glucoside. This chain is Malonyl-coenzyme A:anthocyanin 3-O-glucoside-6''-O-malonyltransferase, found in Dahlia pinnata (Pinnate dahlia).